Consider the following 681-residue polypeptide: UvrABC system protein B (681 aa).

One can recognise a Helicase ATP-binding domain in the interval 30-419 (QGVRDGRHWQ…GEVVELLVRP (390 aa)). 43-50 (GVTGSGKT) contributes to the ATP binding site. The Beta-hairpin motif lies at 96-119 (YYDFYQPEAYLPSLDKYIAKDLRI). The Helicase C-terminal domain occupies 435–601 (QIDNLLAEIR…SIVKSVDQIL (167 aa)). Residues 641 to 676 (YAIVEGLRLEMQEAAEHMEYEKAAYLRDEITKMEQV) enclose the UVR domain.

This sequence belongs to the UvrB family. Forms a heterotetramer with UvrA during the search for lesions. Interacts with UvrC in an incision complex.

The protein localises to the cytoplasm. Its function is as follows. The UvrABC repair system catalyzes the recognition and processing of DNA lesions. A damage recognition complex composed of 2 UvrA and 2 UvrB subunits scans DNA for abnormalities. Upon binding of the UvrA(2)B(2) complex to a putative damaged site, the DNA wraps around one UvrB monomer. DNA wrap is dependent on ATP binding by UvrB and probably causes local melting of the DNA helix, facilitating insertion of UvrB beta-hairpin between the DNA strands. Then UvrB probes one DNA strand for the presence of a lesion. If a lesion is found the UvrA subunits dissociate and the UvrB-DNA preincision complex is formed. This complex is subsequently bound by UvrC and the second UvrB is released. If no lesion is found, the DNA wraps around the other UvrB subunit that will check the other stand for damage. This chain is UvrABC system protein B, found in Chlorobium chlorochromatii (strain CaD3).